A 506-amino-acid polypeptide reads, in one-letter code: Tyrosine-protein kinase isoform SRK4 (506 aa).

Polar residues-rich tracts occupy residues 1-10 (MGSCCSSQDG) and 18-31 (AGSTVDSHELSQSV). Positions 1 to 53 (MGSCCSSQDGDGNGKATAGSTVDSHELSQSVKGKIKQPEPKPKPPPQVPPAQD) are disordered. Positions 54 to 116 (VKYPIYVGKY…PSNYVAEYKS (63 aa)) constitute an SH3 domain. The SH2 domain occupies 122 to 214 (WFFGQVKRVD…GLCVNLKGPC (93 aa)). The Protein kinase domain occupies 240-493 (IKLLRGLGAG…TLSWQLEEFF (254 aa)). ATP contacts are provided by residues 246–254 (LGAGQFGEV) and Lys268. Asp359 (proton acceptor) is an active-site residue.

The protein belongs to the protein kinase superfamily. Tyr protein kinase family.

It is found in the cytoplasm. It carries out the reaction L-tyrosyl-[protein] + ATP = O-phospho-L-tyrosyl-[protein] + ADP + H(+). The sequence is that of Tyrosine-protein kinase isoform SRK4 (SRK1) from Spongilla lacustris (Freshwater sponge).